An 876-amino-acid polypeptide reads, in one-letter code: DNA gyrase subunit A (876 aa).

One can recognise a Topo IIA-type catalytic domain in the interval 34–532 (LPDVRDGLKP…NSVDINIEDL (499 aa)). Catalysis depends on tyrosine 122, which acts as the O-(5'-phospho-DNA)-tyrosine intermediate. The short motif at 559–565 (QRRGGKG) is the GyrA-box element. The interval 844-876 (DEELDAIDGSAAEGDEDIAPEADTDDDIAEDEE) is disordered. A compositionally biased stretch (acidic residues) spans 856–876 (EGDEDIAPEADTDDDIAEDEE).

The protein belongs to the type II topoisomerase GyrA/ParC subunit family. Heterotetramer, composed of two GyrA and two GyrB chains. In the heterotetramer, GyrA contains the active site tyrosine that forms a transient covalent intermediate with DNA, while GyrB binds cofactors and catalyzes ATP hydrolysis.

The protein localises to the cytoplasm. The enzyme catalyses ATP-dependent breakage, passage and rejoining of double-stranded DNA.. A type II topoisomerase that negatively supercoils closed circular double-stranded (ds) DNA in an ATP-dependent manner to modulate DNA topology and maintain chromosomes in an underwound state. Negative supercoiling favors strand separation, and DNA replication, transcription, recombination and repair, all of which involve strand separation. Also able to catalyze the interconversion of other topological isomers of dsDNA rings, including catenanes and knotted rings. Type II topoisomerases break and join 2 DNA strands simultaneously in an ATP-dependent manner. The sequence is that of DNA gyrase subunit A from Klebsiella oxytoca.